We begin with the raw amino-acid sequence, 501 residues long: Fumarate reductase 2 (501 aa).

A mitochondrion-targeting transit peptide spans 1-32; the sequence is MIRSVRRVFIYVSIFVLIIVLKRTLSGTDQTS. Residue 37–51 participates in FAD binding; that stretch reads VVVIGSGLAGLTTSN. Residues His281 and Arg304 contribute to the active site.

The protein belongs to the FAD-dependent oxidoreductase 2 family. FRD/SDH subfamily. FAD serves as cofactor.

The protein resides in the mitochondrion. It catalyses the reaction succinate + NAD(+) = fumarate + NADH + H(+). Irreversibly catalyzes the reduction of fumarate to succinate. Together with the second isozyme of soluble fumarate reductase (FRD1), essential for anaerobic growth. Involved in maintaining redox balance during oxygen deficiency conditions. Reduction of fumarate is the main source of succinate during fermentation, and under anaerobic conditions, the formation of succinate is strictly required for the reoxidation of FADH(2). This is Fumarate reductase 2 (OSM1) from Saccharomyces cerevisiae (strain ATCC 204508 / S288c) (Baker's yeast).